The chain runs to 1411 residues: Tectonin beta-propeller repeat-containing protein 2 (1411 aa).

WD repeat units lie at residues 23 to 66 (IPTK…HLNQ), 67 to 114 (MRKY…PGRN), 115 to 161 (KQLR…LDQG), 162 to 203 (LCNS…EKSV), 204 to 265 (RQIG…AGGV), 266 to 309 (KPFE…EYSI), and 310 to 343 (YLLDTVNQATVAGLEGSGDIVSVSCTENEIFFLK). Disordered stretches follow at residues 379–439 (QAEK…GSQP), 463–542 (VKRK…QENT), 579–637 (RELL…GPQS), and 758–779 (YAHGLPSSSSETSVTELGPSCS). A compositionally biased stretch (low complexity) spans 400–420 (SSVASEPRSRSSSLNSTDSGS). Polar residues-rich tracts occupy residues 475–489 (GSRSTCHSSLESTPC), 496–542 (SPQS…QENT), 608–621 (PNSTQLPFQEQDSS), and 763–779 (PSSSSETSVTELGPSCS). 6 TECPR repeats span residues 945-976 (NVVWALTEQRALLYREGVSSFCPEGEQWKCDI), 994-1027 (QTLWALDIHGNLWFRTGIISKKPQGDDDHWWQVS), 1179-1209 (DALWALDSLGQVFIRTLSKSCPTGMHWTRLD), 1226-1259 (QHIWACDSRGGVYFRVGTQPLNPSLMLPAWIMIE), 1279-1310 (QMLWVLDSRWNVHVRTGITEEMPVGTAWEHVP), and 1322-1353 (RTVWARCPNGDLARRYGVTDKNPAGDYWKKIP). Residues 1388–1411 (HGTQKSSQAAMPHPEDLEDEWEVI) are disordered.

This sequence belongs to the WD repeat KIAA0329 family. As to quaternary structure, interacts with the ATG8 family members GABARAP, GABARAPL1, GABARAPL2, MAP1LC3B and MAP1LC3C. As to expression, detected in skin fibroblast (at protein level).

Functionally, probably plays a role as positive regulator of autophagy. This is Tectonin beta-propeller repeat-containing protein 2 (TECPR2) from Homo sapiens (Human).